Reading from the N-terminus, the 916-residue chain is Transmembrane channel-like protein 2-A (916 aa).

Positions 1-13 (MPKKSDTTRKLED) are enriched in basic and acidic residues. The segment at 1–159 (MPKKSDTTRK…DEEDESMSEG (159 aa)) is disordered. The Cytoplasmic segment spans residues 1 to 271 (MPKKSDTTRK…IFLRWMYGMN (271 aa)). Positions 14 to 26 (VGIEIDGDVDSAE) are enriched in acidic residues. 2 stretches are compositionally biased toward basic residues: residues 31 to 45 (SKGK…GKRG) and 62 to 72 (KGRRAANKKKP). Residues 97-107 (NVRERGDGDKK) show a composition bias toward basic and acidic residues. Basic residues predominate over residues 108-117 (KSGKKGRRGG). The span at 118–138 (KKNEKGKGKDSDKDSDKDEKK) shows a compositional bias: basic and acidic residues. The span at 145-157 (DESDSDEEDESMS) shows a compositional bias: acidic residues. Residues 272 to 292 (LVLFSLTFGLVVIPEVLMGLP) traverse the membrane as a helical segment. The Extracellular portion of the chain corresponds to 293 to 344 (YGSIPRKTVPREDQDTAMDYSVLTDFNGYCKYSVLFYGYYNNQRTIGFLKFR). Residues 345–365 (LPLSYLMVGIGTFGYSLMVVI) traverse the membrane as a helical segment. The Cytoplasmic segment spans residues 366–438 (RTMAKNADVG…ENIHLRRFLR (73 aa)). Residues 439–459 (VLANFLITCTLGGSGYLIYFV) form a helical membrane-spanning segment. Topologically, residues 460 to 478 (VKRSQEFQNMDNLSWYEKN) are extracellular. The chain crosses the membrane as a helical span at residues 479–499 (ELEIIMSLLGLVGPMLFETIA). Over 500–516 (ELEEYHPRIALKWQLGR) the chain is Cytoplasmic. A helical membrane pass occupies residues 517 to 537 (IFALFLGNLYTFLLALFDEVN). Over 538 to 649 (AKLEEEESIK…EFDISGNVLG (112 aa)) the chain is Extracellular. Residues 650-670 (LVFNQGMIWMGAFYAPGLVGI) traverse the membrane as a helical segment. The Cytoplasmic portion of the chain corresponds to 671–704 (NVLRLLSSMYYQCWAVMACNVPHERVFKASKSNN). A helical transmembrane segment spans residues 705-725 (FYMGLLLLILFLSLLPVVYTI). Residues 726–762 (MSLPPSFDCGPFSGKERMFDVVMETIDLDLPAFMGTL) are Extracellular-facing. A helical transmembrane segment spans residues 763 to 783 (FGYVANPGLVISAVLLMVLAI). Residues 784 to 916 (YYLNSVSEAY…RGQGPPPRRQ (133 aa)) are Cytoplasmic-facing. The span at 804–818 (MQMARDEEKNRRNNK) shows a compositional bias: basic and acidic residues. Residues 804 to 916 (MQMARDEEKN…RGQGPPPRRQ (113 aa)) form a disordered region. A compositionally biased stretch (low complexity) spans 883–892 (ARGPVTRAPG).

It belongs to the TMC family. Interacts (via N-terminus) with both isoforms CD1 and CD3 of PCDH15A (via cytoplasmic domain); this interaction is required for mechanotransduction of the hair cells and correct localization of PCDH15A in hair bundles of the hair cells. In adults, expression is restricted to the hair cells of inner ear and lateral line organ. Expressed at higher levels in the larval inner ear than in the lateral-line neuromasts.

The protein resides in the cell membrane. It carries out the reaction Ca(2+)(in) = Ca(2+)(out). Its function is as follows. Pore-forming subunit of the mechanotransducer (MET) non-selective cation channel complex located at tips of hair-cell stereocilia. Highly permeable to calcium and likely transports monovalent cations. In Danio rerio (Zebrafish), this protein is Transmembrane channel-like protein 2-A.